A 212-amino-acid polypeptide reads, in one-letter code: NADH-quinone oxidoreductase subunit I (212 aa).

4Fe-4S ferredoxin-type domains lie at 76–105 and 115–144; these read RLLE…IITD and LNYS…HGDL. Positions 85, 88, 91, 95, 124, 127, 130, and 134 each coordinate [4Fe-4S] cluster.

Belongs to the complex I 23 kDa subunit family. As to quaternary structure, NDH-1 is composed of 14 different subunits. Subunits NuoA, H, J, K, L, M, N constitute the membrane sector of the complex. [4Fe-4S] cluster is required as a cofactor.

The protein resides in the cell inner membrane. It carries out the reaction a quinone + NADH + 5 H(+)(in) = a quinol + NAD(+) + 4 H(+)(out). In terms of biological role, NDH-1 shuttles electrons from NADH, via FMN and iron-sulfur (Fe-S) centers, to quinones in the respiratory chain. The immediate electron acceptor for the enzyme in this species is believed to be ubiquinone. Couples the redox reaction to proton translocation (for every two electrons transferred, four hydrogen ions are translocated across the cytoplasmic membrane), and thus conserves the redox energy in a proton gradient. The chain is NADH-quinone oxidoreductase subunit I from Helicobacter hepaticus (strain ATCC 51449 / 3B1).